Consider the following 144-residue polypeptide: Acidic phospholipase A2 (144 aa).

The signal sequence occupies residues Met1–Ala19. The propeptide occupies Ser20–Leu27. Disulfide bonds link Cys38/Cys98, Cys54/Cys143, Cys56/Cys72, Cys71/Cys125, Cys78/Cys118, Cys87/Cys111, and Cys105/Cys116. Tyr55, Gly57, and Gly59 together coordinate Ca(2+). His75 is an active-site residue. Asp76 provides a ligand contact to Ca(2+). Asp119 is an active-site residue.

It belongs to the phospholipase A2 family. Group I subfamily. D49 sub-subfamily. Ca(2+) serves as cofactor. Expressed by the venom gland.

It is found in the secreted. It catalyses the reaction a 1,2-diacyl-sn-glycero-3-phosphocholine + H2O = a 1-acyl-sn-glycero-3-phosphocholine + a fatty acid + H(+). In terms of biological role, PLA2 catalyzes the calcium-dependent hydrolysis of the 2-acyl groups in 3-sn-phosphoglycerides. The protein is Acidic phospholipase A2 of Aipysurus laevis (Olive sea snake).